A 476-amino-acid polypeptide reads, in one-letter code: 3-isopropylmalate dehydratase large subunit (476 aa).

Residues cysteine 353, cysteine 413, and cysteine 416 each contribute to the [4Fe-4S] cluster site.

The protein belongs to the aconitase/IPM isomerase family. LeuC type 1 subfamily. In terms of assembly, heterodimer of LeuC and LeuD. Requires [4Fe-4S] cluster as cofactor.

The catalysed reaction is (2R,3S)-3-isopropylmalate = (2S)-2-isopropylmalate. It participates in amino-acid biosynthesis; L-leucine biosynthesis; L-leucine from 3-methyl-2-oxobutanoate: step 2/4. In terms of biological role, catalyzes the isomerization between 2-isopropylmalate and 3-isopropylmalate, via the formation of 2-isopropylmaleate. The polypeptide is 3-isopropylmalate dehydratase large subunit (Yersinia pseudotuberculosis serotype O:1b (strain IP 31758)).